Here is a 1007-residue protein sequence, read N- to C-terminus: Bifunctional glutamine synthetase adenylyltransferase/adenylyl-removing enzyme (1007 aa).

The tract at residues 1–496 (MTREQLSLTV…LHERLFYRPL (496 aa)) is adenylyl removase. The segment at 505-1007 (NEDARLSGEA…GPPQRPATTA (503 aa)) is adenylyl transferase.

Belongs to the GlnE family. Mg(2+) is required as a cofactor.

It catalyses the reaction [glutamine synthetase]-O(4)-(5'-adenylyl)-L-tyrosine + phosphate = [glutamine synthetase]-L-tyrosine + ADP. The catalysed reaction is [glutamine synthetase]-L-tyrosine + ATP = [glutamine synthetase]-O(4)-(5'-adenylyl)-L-tyrosine + diphosphate. Its function is as follows. Involved in the regulation of glutamine synthetase GlnA, a key enzyme in the process to assimilate ammonia. When cellular nitrogen levels are high, the C-terminal adenylyl transferase (AT) inactivates GlnA by covalent transfer of an adenylyl group from ATP to specific tyrosine residue of GlnA, thus reducing its activity. Conversely, when nitrogen levels are low, the N-terminal adenylyl removase (AR) activates GlnA by removing the adenylyl group by phosphorolysis, increasing its activity. The regulatory region of GlnE binds the signal transduction protein PII (GlnB) which indicates the nitrogen status of the cell. This Leifsonia xyli subsp. xyli (strain CTCB07) protein is Bifunctional glutamine synthetase adenylyltransferase/adenylyl-removing enzyme.